Consider the following 183-residue polypeptide: ATP synthase subunit b, chloroplastic (183 aa).

Residues 27-49 (LATNLINLTVVVGVLIYFGKGVL) form a helical membrane-spanning segment.

This sequence belongs to the ATPase B chain family. As to quaternary structure, F-type ATPases have 2 components, F(1) - the catalytic core - and F(0) - the membrane proton channel. F(1) has five subunits: alpha(3), beta(3), gamma(1), delta(1), epsilon(1). F(0) has four main subunits: a(1), b(1), b'(1) and c(10-14). The alpha and beta chains form an alternating ring which encloses part of the gamma chain. F(1) is attached to F(0) by a central stalk formed by the gamma and epsilon chains, while a peripheral stalk is formed by the delta, b and b' chains.

It localises to the plastid. Its subcellular location is the chloroplast thylakoid membrane. In terms of biological role, f(1)F(0) ATP synthase produces ATP from ADP in the presence of a proton or sodium gradient. F-type ATPases consist of two structural domains, F(1) containing the extramembraneous catalytic core and F(0) containing the membrane proton channel, linked together by a central stalk and a peripheral stalk. During catalysis, ATP synthesis in the catalytic domain of F(1) is coupled via a rotary mechanism of the central stalk subunits to proton translocation. Component of the F(0) channel, it forms part of the peripheral stalk, linking F(1) to F(0). The polypeptide is ATP synthase subunit b, chloroplastic (Oryza nivara (Indian wild rice)).